The sequence spans 150 residues: Ribonuclease H (150 aa).

The RNase H type-1 domain maps to 1–142 (MSDSVELFTD…ADQLANRGVD (142 aa)). Mg(2+) contacts are provided by Asp-10, Glu-48, Asp-70, and Asp-134.

The protein belongs to the RNase H family. In terms of assembly, monomer. It depends on Mg(2+) as a cofactor.

It localises to the cytoplasm. The enzyme catalyses Endonucleolytic cleavage to 5'-phosphomonoester.. Functionally, endonuclease that specifically degrades the RNA of RNA-DNA hybrids. The polypeptide is Ribonuclease H (Pseudomonas syringae pv. syringae (strain B728a)).